The chain runs to 147 residues: Hemoglobin subunit beta (147 aa).

The 145-residue stretch at 3–147 (HWTPEEKQYI…VAHALALGYH (145 aa)) folds into the Globin domain. Heme b is bound by residues His64 and His93.

This sequence belongs to the globin family. Heterotetramer of two alpha-D chains and two beta chains. Red blood cells.

In terms of biological role, involved in oxygen transport from the lung to the various peripheral tissues. The chain is Hemoglobin subunit beta (HBB) from Chelonoidis niger (Galapagos giant tortoise).